We begin with the raw amino-acid sequence, 187 residues long: Putative acyl-coenzyme A oxidase At3g06690 (187 aa).

A disordered region spans residues 1–21 (MTKEPIYSPRMLHRDPDSPRP).

Belongs to the acyl-CoA oxidase family.

The catalysed reaction is a 2,3-saturated acyl-CoA + O2 = a (2E)-enoyl-CoA + H2O2. This is Putative acyl-coenzyme A oxidase At3g06690 from Arabidopsis thaliana (Mouse-ear cress).